The chain runs to 132 residues: Large ribosomal subunit protein uL22 (132 aa).

This sequence belongs to the universal ribosomal protein uL22 family. In terms of assembly, part of the 50S ribosomal subunit.

This protein binds specifically to 23S rRNA; its binding is stimulated by other ribosomal proteins, e.g. L4, L17, and L20. It is important during the early stages of 50S assembly. It makes multiple contacts with different domains of the 23S rRNA in the assembled 50S subunit and ribosome. Functionally, the globular domain of the protein is located near the polypeptide exit tunnel on the outside of the subunit, while an extended beta-hairpin is found that lines the wall of the exit tunnel in the center of the 70S ribosome. The protein is Large ribosomal subunit protein uL22 of Rhodospirillum centenum (strain ATCC 51521 / SW).